Here is a 505-residue protein sequence, read N- to C-terminus: Catalase (505 aa).

The segment at 1–25 (MSRQDKKLTGVFGHPVSDRENSMTA) is disordered. Catalysis depends on residues histidine 56 and asparagine 129. Tyrosine 339 lines the heme pocket.

It belongs to the catalase family. As to quaternary structure, homodimer. Requires heme as cofactor.

The catalysed reaction is 2 H2O2 = O2 + 2 H2O. Functionally, decomposes hydrogen peroxide into water and oxygen; serves to protect cells from the toxic effects of hydrogen peroxide. The chain is Catalase (katA) from Staphylococcus aureus (strain MRSA252).